Here is a 236-residue protein sequence, read N- to C-terminus: Nopaline transport system permease protein NocQ (236 aa).

The region spanning 21–222 (AMMTVVVAAC…LLSSVSNRGF (202 aa)) is the ABC transmembrane type-1 domain. A run of 4 helical transmembrane segments spans residues 25–45 (VVVA…FAAA), 63–83 (VVRG…GGTL), 102–122 (IFVI…TEVI), and 199–219 (QPFT…SVSN).

It belongs to the binding-protein-dependent transport system permease family. HisMQ subfamily.

The protein resides in the cell inner membrane. Functionally, component of the nopaline active transport system probably consisting of four subunits: Q, M, P and T. This system is also capable of transporting octopine provided that catabolic functions are induced with nopaline. The chain is Nopaline transport system permease protein NocQ (nocQ) from Agrobacterium fabrum (strain C58 / ATCC 33970) (Agrobacterium tumefaciens (strain C58)).